A 637-amino-acid polypeptide reads, in one-letter code: Sodium-dependent proline transporter (637 aa).

The Cytoplasmic segment spans residues 1 to 45 (MKKLQEAHLRKPVTPDLLMTPSDQGDVDLDVDFAADRGNWTGKLD). Threonine 20 is modified (phosphothreonine). Residue serine 22 is modified to Phosphoserine. The next 3 membrane-spanning stretches (helical) occupy residues 46–66 (FLLSCIGYCVGLGNVWRFPYR), 74–93 (AFLVPYFLMLAICGIPLFFL), and 117–137 (GAGAAMLLIVGLVAIYYNMII). The Extracellular portion of the chain corresponds to 138-214 (AYVLFYLFAS…QGIGRPGEIR (77 aa)). N-linked (GlcNAc...) asparagine glycosylation is present at asparagine 182. 9 helical membrane-spanning segments follow: residues 215–233 (WNLCLCLLLAWVIVFLCIL), 242–259 (VVYFTATFPYLILLMLLV), 295–312 (IFYSLGVGFGGLLTFASY), 324–345 (FIVTLGNAITSILAGFAIFSVL), 378–397 (LPLSPFWSFLFFFMLLTLGL), 425–443 (VFSGLICVAMYLMGLILTT), 459–479 (SFGLMVVVITTCLAVTRVYGI), 500–519 (ACWLFLSPATLLALLVYSIV), and 538–556 (LGILMGLLSCLMIPAGMLV). Topologically, residues 557 to 637 (AVLREEGSLW…IAEEEEESMM (81 aa)) are cytoplasmic. A phosphoserine mark is found at serine 573 and serine 582. A Phosphothreonine modification is found at threonine 588. Tyrosine 591 is subject to Phosphotyrosine. Phosphoserine is present on residues serine 598 and serine 600.

The protein belongs to the sodium:neurotransmitter symporter (SNF) (TC 2.A.22) family. SLC6A7 subfamily. Expressed in subpopulations of putative glutamatergic pathways of rat brain.

It localises to the synaptic cell membrane. The catalysed reaction is L-proline(out) + chloride(out) + 2 Na(+)(out) = L-proline(in) + chloride(in) + 2 Na(+)(in). The enzyme catalyses L-pipecolate(out) + chloride(out) + 2 Na(+)(out) = L-pipecolate(in) + chloride(in) + 2 Na(+)(in). Functionally, brain specific sodium (and chloride)-dependent proline transporter. Terminates the action of proline by its high affinity sodium-dependent reuptake into presynaptic terminals. The polypeptide is Sodium-dependent proline transporter (Slc6a7) (Rattus norvegicus (Rat)).